A 165-amino-acid chain; its full sequence is Crossover junction endodeoxyribonuclease RuvC (165 aa).

Active-site residues include Asp-8, Glu-67, and Asp-139. Positions 8, 67, and 139 each coordinate Mg(2+).

It belongs to the RuvC family. As to quaternary structure, homodimer which binds Holliday junction (HJ) DNA. The HJ becomes 2-fold symmetrical on binding to RuvC with unstacked arms; it has a different conformation from HJ DNA in complex with RuvA. In the full resolvosome a probable DNA-RuvA(4)-RuvB(12)-RuvC(2) complex forms which resolves the HJ. Mg(2+) serves as cofactor.

It localises to the cytoplasm. The catalysed reaction is Endonucleolytic cleavage at a junction such as a reciprocal single-stranded crossover between two homologous DNA duplexes (Holliday junction).. The RuvA-RuvB-RuvC complex processes Holliday junction (HJ) DNA during genetic recombination and DNA repair. Endonuclease that resolves HJ intermediates. Cleaves cruciform DNA by making single-stranded nicks across the HJ at symmetrical positions within the homologous arms, yielding a 5'-phosphate and a 3'-hydroxyl group; requires a central core of homology in the junction. The consensus cleavage sequence is 5'-(A/T)TT(C/G)-3'. Cleavage occurs on the 3'-side of the TT dinucleotide at the point of strand exchange. HJ branch migration catalyzed by RuvA-RuvB allows RuvC to scan DNA until it finds its consensus sequence, where it cleaves and resolves the cruciform DNA. The chain is Crossover junction endodeoxyribonuclease RuvC from Alkalilimnicola ehrlichii (strain ATCC BAA-1101 / DSM 17681 / MLHE-1).